A 518-amino-acid polypeptide reads, in one-letter code: Arrestin-related trafficking adapter 10 (518 aa).

Lys-118 participates in a covalent cross-link: Glycyl lysine isopeptide (Lys-Gly) (interchain with G-Cter in ubiquitin).

This sequence belongs to the ART10 family. In terms of assembly, interacts with RSP5. Ubiquitinated by RSP5.

It is found in the cytoplasm. In terms of biological role, may regulate endocytosis by recruiting RSP5 ubiquitin ligase activity to specific plasma membrane proteins in response to extracellular stimuli. This chain is Arrestin-related trafficking adapter 10 (ART10), found in Saccharomyces cerevisiae (strain YJM789) (Baker's yeast).